Consider the following 497-residue polypeptide: Glycerol kinase (497 aa).

Threonine 12 is a binding site for ADP. Residues threonine 12, threonine 13, and serine 14 each coordinate ATP. Residue threonine 12 participates in sn-glycerol 3-phosphate binding. Arginine 16 is a binding site for ADP. Residues arginine 82, glutamate 83, tyrosine 134, and aspartate 243 each coordinate sn-glycerol 3-phosphate. 5 residues coordinate glycerol: arginine 82, glutamate 83, tyrosine 134, aspartate 243, and glutamine 244. Residues threonine 265 and glycine 308 each contribute to the ADP site. Threonine 265, glycine 308, glutamine 312, and glycine 409 together coordinate ATP. Residues glycine 409 and asparagine 413 each contribute to the ADP site.

It belongs to the FGGY kinase family.

The catalysed reaction is glycerol + ATP = sn-glycerol 3-phosphate + ADP + H(+). Its pathway is polyol metabolism; glycerol degradation via glycerol kinase pathway; sn-glycerol 3-phosphate from glycerol: step 1/1. Inhibited by fructose 1,6-bisphosphate (FBP). Its function is as follows. Key enzyme in the regulation of glycerol uptake and metabolism. Catalyzes the phosphorylation of glycerol to yield sn-glycerol 3-phosphate. In Solidesulfovibrio magneticus (strain ATCC 700980 / DSM 13731 / RS-1) (Desulfovibrio magneticus), this protein is Glycerol kinase.